The chain runs to 271 residues: Formamidopyrimidine-DNA glycosylase (271 aa).

The active-site Schiff-base intermediate with DNA is P2. E3 functions as the Proton donor in the catalytic mechanism. K57 acts as the Proton donor; for beta-elimination activity in catalysis. The DNA site is built by H90, R109, and K151. The FPG-type zinc finger occupies H236–P270. Catalysis depends on R260, which acts as the Proton donor; for delta-elimination activity.

This sequence belongs to the FPG family. In terms of assembly, monomer. The cofactor is Zn(2+).

The enzyme catalyses Hydrolysis of DNA containing ring-opened 7-methylguanine residues, releasing 2,6-diamino-4-hydroxy-5-(N-methyl)formamidopyrimidine.. The catalysed reaction is 2'-deoxyribonucleotide-(2'-deoxyribose 5'-phosphate)-2'-deoxyribonucleotide-DNA = a 3'-end 2'-deoxyribonucleotide-(2,3-dehydro-2,3-deoxyribose 5'-phosphate)-DNA + a 5'-end 5'-phospho-2'-deoxyribonucleoside-DNA + H(+). Involved in base excision repair of DNA damaged by oxidation or by mutagenic agents. Acts as a DNA glycosylase that recognizes and removes damaged bases. Has a preference for oxidized purines, such as 7,8-dihydro-8-oxoguanine (8-oxoG). Has AP (apurinic/apyrimidinic) lyase activity and introduces nicks in the DNA strand. Cleaves the DNA backbone by beta-delta elimination to generate a single-strand break at the site of the removed base with both 3'- and 5'-phosphates. The chain is Formamidopyrimidine-DNA glycosylase from Shewanella loihica (strain ATCC BAA-1088 / PV-4).